The primary structure comprises 729 residues: MSWFADLAGRAEDLLNRVDQGAATALRKENTSNIFYSKNTDYPELQQQNTDSNYQTGQKANYISSAADNIRHQKATILAGTANVKVGSRTVGDATHPTEHASAPRPSSQFVRRKKSEPDDELLFDFLNSSQKEPTGRVEVKKEKGRAPVSPSSPSGVSSVNTSVTTTKAMGGNAGSQSPGVNSSDSVPEVHKEPSEESTAPSATSEEHSSTPSDGSSRSQELSNLRLENQLLRNEVQSLNQEMASLLQRSKETQEELNKARVRVEKWNVDNSKSDRITRELRAQVDDLTEAVAAKDSQLAVLKVRLQEADQVLSSRTEALEALRSEKSRIMQDHKEGSSLQNQALQTLQERLHEADATLKREQESYKQMQSEFAARLNKMEVDRQNLAEAVTLAERKYSEEKKKVDELQQQVKLHRASLESAKQELVDYKQKATRILQSKEKLINSLKEGSSFEGLESSTASSMELEELRHEKEMQKEEIQKLMGQMHQLRSELQDMEAQQVSEAESAREQLQDLQDQIAKQRTSKQELETELERMKQEFRYMEEDLHRTKNTLQSRIKDREEEIQKLRNQLTNKTLSNSSQSELESRLHQLTETLIQKQTMLESLSTEKNSLVFQLERLEQQVHSASSGPNSGSAINMSGVDSGEGTRLRNVPVLFNDTETNLAGMYGKVRKAASSIDQFSIRLGIFLRRYPIARVFVIIYMALLHLWVMIVLLTYSPEMHHDQPYGK.

Ser2 carries the N-acetylserine modification. The Cytoplasmic segment spans residues 2–696 (SWFADLAGRA…IFLRRYPIAR (695 aa)). Residues Arg27 and Arg89 each carry the dimethylated arginine modification. Disordered stretches follow at residues 89–222 (RTVG…SQEL) and 626–645 (SASSGPNSGSAINMSGVDSG). Ser116 carries the phosphoserine modification. A compositionally biased stretch (basic and acidic residues) spans 134–146 (PTGRVEVKKEKGR). The segment covering 148–167 (PVSPSSPSGVSSVNTSVTTT) has biased composition (low complexity). 2 stretches are compositionally biased toward polar residues: residues 175–186 (GSQSPGVNSSDS) and 626–638 (SASSGPNSGSAIN). Residues 215 to 629 (GSSRSQELSN…LEQQVHSASS (415 aa)) adopt a coiled-coil conformation. A helical; Anchor for type IV membrane protein membrane pass occupies residues 697–717 (VFVIIYMALLHLWVMIVLLTY). Residues 718–729 (SPEMHHDQPYGK) lie on the Lumenal side of the membrane.

Homodimer. Interacts with RAB1A that has been activated by GTP-binding. Interacts with isoform CASP of CUX1. Highly phosphorylated during mitosis. Phosphorylation is barely detectable during interphase.

The protein localises to the golgi apparatus membrane. Functionally, involved in maintaining Golgi structure. Stimulates the formation of Golgi stacks and ribbons. Involved in intra-Golgi retrograde transport. In Mus musculus (Mouse), this protein is Golgin subfamily A member 5 (Golga5).